The sequence spans 341 residues: MKSVSTLGSHCSLQLLKGAKDEGFRTLLVCERRRERFYRRFGFIDELVLVDGFGELLGDECQSVLAENDSILIPHGTLVAQMSPDQIESIGVPVFGNKWILRWESDRSLKERLMREARLRMPRSIDSPGDIDTLVIVKRQGAAGGKGYFMANSEEEYESKRLSLIESGVISTDEDLYIQEYVPGVLAYLQFFYSPLKADIEFFGADQRHESDIEGLARIPAPVQMGSSGIPSFNVIGNSPLVLRESLLEGAYRMGEDFVEASSRLVAPGMNGPFCIEGVYGDDGRFTSFEFSARIVAGTNIYMNGSPYYGLLFDEPISMGRRIAREIKSAIAEERLDETVT.

The 5-amino-1-(5-phospho-beta-D-ribosyl)imidazole-4-carboxamide site is built by His-10 and Thr-77. An ATP-grasp domain is found at 106–317 (DRSLKERLMR…YYGLLFDEPI (212 aa)). ATP contacts are provided by residues 132 to 188 (DTLV…VLAY) and Glu-210. Asn-238 lines the 5-amino-1-(5-phospho-beta-D-ribosyl)imidazole-4-carboxamide pocket. Positions 277 and 290 each coordinate Mg(2+).

This sequence belongs to the phosphohexose mutase family. The cofactor is Mg(2+). It depends on Mn(2+) as a cofactor.

The enzyme catalyses 5-amino-1-(5-phospho-beta-D-ribosyl)imidazole-4-carboxamide + formate + ATP = 5-formamido-1-(5-phospho-D-ribosyl)imidazole-4-carboxamide + ADP + phosphate. The protein operates within purine metabolism; IMP biosynthesis via de novo pathway; 5-formamido-1-(5-phospho-D-ribosyl)imidazole-4-carboxamide from 5-amino-1-(5-phospho-D-ribosyl)imidazole-4-carboxamide (formate route): step 1/1. Its function is as follows. Catalyzes the ATP- and formate-dependent formylation of 5-aminoimidazole-4-carboxamide-1-beta-d-ribofuranosyl 5'-monophosphate (AICAR) to 5-formaminoimidazole-4-carboxamide-1-beta-d-ribofuranosyl 5'-monophosphate (FAICAR) in the absence of folates. In Cenarchaeum symbiosum (strain A), this protein is 5-formaminoimidazole-4-carboxamide-1-(beta)-D-ribofuranosyl 5'-monophosphate synthetase.